A 315-amino-acid polypeptide reads, in one-letter code: MGSLNESSKVLVIGGTGYLGKRLVKASLDAGHDTYVMHRPEIGVDIEKVQLLLSFKMQGAHLVSASFDDHRSLVDAVSLVDVVICAISGVHIRSHQILLQLKLVQAIKEAGNVKRFLPSEFGTDPARMGDAMEPGRVTFDDKMVVRRAIEEAAIPFTYVSANCFAGYFLGGLCQPGSILPSRDHVTLLGDGNQKGVYVDENDIAAYTLKAIDDPRTLNKTLYIKPPKNILSQRQVVGIWEKHIGKQLHKTLLSEQDFLAAMKEQDYAEQVGLTHYYHVCYEGCLTNFEVEQDQEASKLYPDVRYTTVEEYLKRYV.

Residues 14-20 (GGTGYLG), R39, and K48 each bind NADP(+). The active-site Proton acceptor is K142. R146 lines the NADP(+) pocket. H274 lines the substrate pocket.

Belongs to the NmrA-type oxidoreductase family. Isoflavone reductase subfamily. In terms of assembly, dimer.

The enzyme catalyses (+)-lariciresinol + NADP(+) = (+)-pinoresinol + NADPH + H(+). The catalysed reaction is (-)-secoisolariciresinol + NADP(+) = (+)-lariciresinol + NADPH + H(+). Its function is as follows. Reductase involved in lignan (-)-hinokinin biosynthesis. Catalyzes the enantioselective conversion of (+)-pinoresinol into (+)-lariciresinol and of (+)-lariciresinol into (-)-secoisolariciresinol. Abstracts the 4R-hydride from the NADPH cofactor during catalysis. Has also a low phenylcoumaran benzylic ether reductase activity. The protein is Bifunctional pinoresinol-lariciresinol reductase (PLR_Lc1) of Linum corymbulosum (Linum).